The following is a 252-amino-acid chain: 14-3-3-like protein GF14 omicron (252 aa).

Phosphoserine occurs at positions 65 and 188.

Belongs to the 14-3-3 family.

It localises to the nucleus. The protein resides in the cytoplasm. In terms of biological role, is associated with a DNA binding complex that binds to the G box, a well-characterized cis-acting DNA regulatory element found in plant genes. The polypeptide is 14-3-3-like protein GF14 omicron (GRF11) (Arabidopsis thaliana (Mouse-ear cress)).